Here is a 165-residue protein sequence, read N- to C-terminus: Transcriptional regulator MraZ (165 aa).

SpoVT-AbrB domains follow at residues 5–51 (TYEG…GEEL) and 80–123 (SAEL…NPER).

Belongs to the MraZ family. As to quaternary structure, forms oligomers.

It localises to the cytoplasm. The protein localises to the nucleoid. In Hyphomonas neptunium (strain ATCC 15444), this protein is Transcriptional regulator MraZ.